The primary structure comprises 231 residues: uncharacterized protein (231 aa).

Residue 10–34 coordinates NADP(+); that stretch reads VVTGAGSGIGEAIATLLHEEGAKVV. Ser140 serves as a coordination point for substrate. Tyr153 serves as the catalytic Proton acceptor.

This sequence belongs to the short-chain dehydrogenases/reductases (SDR) family.

This is an uncharacterized protein from Staphylococcus aureus (strain MRSA252).